The primary structure comprises 157 residues: MHSNVKKVTDKDVIKPVGVPFVVYFSSISNNTHRFIQKLEIENLRIPYEIEQSISVDRDYVLVTPTYSGGGEYVEGAVPKQVIKFLNNKQNRSFCRGVISSGNTNFGDTFGIAGPIISKKLNVPFLYQFELLGTQHDVSQIKQILFKFWEDGNNERK.

The protein belongs to the NrdI family.

Functionally, probably involved in ribonucleotide reductase function. This chain is Protein NrdI, found in Mycoplasma capricolum subsp. capricolum (strain California kid / ATCC 27343 / NCTC 10154).